A 539-amino-acid polypeptide reads, in one-letter code: GMP synthase [glutamine-hydrolyzing] (539 aa).

Residues 4-202 enclose the Glutamine amidotransferase type-1 domain; that stretch reads KILILDFGSQ…VLQIAGAKPD (199 aa). C81 acts as the Nucleophile in catalysis. Catalysis depends on residues H176 and E178. The GMPS ATP-PPase domain maps to 203-395; that stretch reads WIMKNHIEEA…LGLPPEMVYR (193 aa). 230–236 is a binding site for ATP; that stretch reads SGGVDSS.

In terms of assembly, homodimer.

It catalyses the reaction XMP + L-glutamine + ATP + H2O = GMP + L-glutamate + AMP + diphosphate + 2 H(+). It participates in purine metabolism; GMP biosynthesis; GMP from XMP (L-Gln route): step 1/1. Its function is as follows. Catalyzes the synthesis of GMP from XMP. This chain is GMP synthase [glutamine-hydrolyzing], found in Burkholderia vietnamiensis (strain G4 / LMG 22486) (Burkholderia cepacia (strain R1808)).